A 309-amino-acid polypeptide reads, in one-letter code: Homoserine O-succinyltransferase (309 aa).

The Acyl-thioester intermediate role is filled by C142. Residues K163 and S192 each contribute to the substrate site. H235 acts as the Proton acceptor in catalysis. E237 is an active-site residue. R249 serves as a coordination point for substrate.

Belongs to the MetA family. Homodimer.

The protein resides in the cytoplasm. It catalyses the reaction L-homoserine + succinyl-CoA = O-succinyl-L-homoserine + CoA. Its pathway is amino-acid biosynthesis; L-methionine biosynthesis via de novo pathway; O-succinyl-L-homoserine from L-homoserine: step 1/1. Transfers a succinyl group from succinyl-CoA to L-homoserine, forming succinyl-L-homoserine. The sequence is that of Homoserine O-succinyltransferase from Escherichia coli O127:H6 (strain E2348/69 / EPEC).